The primary structure comprises 60 residues: Mastoparan-VB1 (60 aa).

Positions methionine 1–alanine 23 are cleaved as a signal peptide. Positions glutamate 24–proline 45 are excised as a propeptide. 4 AXPX repeats span residues alanine 27–lysine 30, alanine 31–leucine 34, alanine 35–phenylalanine 38, and aspartate 40–proline 43. The residue at position 59 (leucine 59) is a Leucine amide.

In terms of tissue distribution, expressed by the venom gland.

Its subcellular location is the secreted. It localises to the target cell membrane. In terms of biological role, antimicrobial peptide. Shows activity against both Gram-positive (S.aureus MIC=1.9-3.75 ug/ml) and -negative (E.coli MIC=15-60 ug/ml) bacteria, as well against fungi (C.albicans MIC=15 ug/ml). Also promotes moderate mast cell degranulation. Does not show hemolytic activity on rabbit and human erythrocytes. Its mast cell degranulation activity may be related to the activation of G-protein coupled receptors in mast cells as well as interaction with other proteins located in cell endosomal membranes in the mast cells. The polypeptide is Mastoparan-VB1 (Vespa bicolor (Black shield wasp)).